Reading from the N-terminus, the 597-residue chain is MPNNDILRPLAIPAKYVGSFLVFLYNGLYFVFVVNLWSRLFGKATKTEVPPLPKIRKLGKDMASRAPPRRGQSSEDNEDGLPAEIFNVRRHHKQAYAYIARALEVDEGQGSLETKKRAVEFYNRGIEEMEAGLLIPCIDEGEEWDKARRLQEKMEANLENTRERMDELVIIFFIIVVALLVSAGMMDDQPLLSARKTSSEPSQAWDVSKPTGPSYKQSKSYKNSTTVTTKRSQASPSFSSSSSSVNSTAGSSRTKPAKPAPMAAPRRYNPQVRRTKSTKPAMMAKQSCVDEQKKKISHLKGIDPKLANIIMDEILESGPAVHFSDIAGVDNAKKALQEIVILPSLRPELWRGDPTLVLFQVLPYPPGSSHITLPRASTATSFTSCFFSISKRSSLVHPVVASFFVKSLEDLASILTTSLFTIDEVDSLLTERREGEHEHSRRLKTEFLVSFDGVVADPEERILVMGATNRPQELDDAALRRMVKRIHIPLPDKETRKVLLTKLLAKHHNPLSGAEIDRLARMTEHYSGSDLTALARDAALGPIRDLNSDQLKSMAANEVRNITFQDFVNSLQIIRPSVGPETLKAYDDWNRLYGSNA.

The Cytoplasmic segment spans residues 1–20; that stretch reads MPNNDILRPLAIPAKYVGSF. The helical intramembrane region spans 21–37; it reads LVFLYNGLYFVFVVNLW. The Cytoplasmic segment spans residues 38–597; sequence SRLFGKATKT…DWNRLYGSNA (560 aa). The segment at 56 to 80 is disordered; sequence RKLGKDMASRAPPRRGQSSEDNEDG. Residues 91–168 enclose the MIT domain; that stretch reads HHKQAYAYIA…ENTRERMDEL (78 aa). The interval 193 to 289 is disordered; it reads SARKTSSEPS…PAMMAKQSCV (97 aa). Positions 214–231 are enriched in polar residues; it reads SYKQSKSYKNSTTVTTKR. Low complexity predominate over residues 232-252; the sequence is SQASPSFSSSSSSVNSTAGSS.

The protein belongs to the AAA ATPase family. Spastin subfamily. In terms of assembly, homohexamer. The homohexamer is stabilized by ATP-binding. The homohexamer may adopt a ring conformation through which microtubules pass prior to being severed. Interacts with microtubules.

The protein resides in the membrane. It localises to the cytoplasm. The protein localises to the cytoskeleton. It is found in the microtubule organizing center. Its subcellular location is the centrosome. The enzyme catalyses n ATP + n H2O + a microtubule = n ADP + n phosphate + (n+1) alpha/beta tubulin heterodimers.. ATP-dependent microtubule severing protein. Microtubule severing may promote reorganization of cellular microtubule arrays and the release of microtubules from the microtubule organizing center following nucleation. This chain is Spastin, found in Nematostella vectensis (Starlet sea anemone).